The chain runs to 673 residues: Bifunctional lycopene cyclase/phytoene synthase (673 aa).

The lycopene beta-cyclase stretch occupies residues 1-251; sequence MTALAYYQIH…IVLGLSACDH (251 aa). 7 helical membrane passes run 9-29, 36-56, 81-101, 117-137, 157-177, 187-207, and 226-246; these read IHLI…SPIL, KISI…SWII, YEEY…YVLA, SALS…LFTA, LSLL…EYAF, TIAA…VAVG, and VLPI…VLGL. The interval 258–673 is phytoene synthase; it reads LHGRTIYGNK…SVVMSGWEGQ (416 aa). Positions 376 to 399 are disordered; sequence KILSSPLLPPSHPSRPTGMYPLPP.

In the N-terminal section; belongs to the lycopene beta-cyclase family. It in the C-terminal section; belongs to the phytoene/squalene synthase family.

The protein resides in the membrane. It catalyses the reaction all-trans-lycopene = gamma-carotene. The catalysed reaction is gamma-carotene = all-trans-beta-carotene. It carries out the reaction 2 (2E,6E,10E)-geranylgeranyl diphosphate = 15-cis-phytoene + 2 diphosphate. It functions in the pathway carotenoid biosynthesis; beta-carotene biosynthesis. The protein operates within carotenoid biosynthesis; phytoene biosynthesis; all-trans-phytoene from geranylgeranyl diphosphate: step 1/1. In terms of biological role, bifunctional enzyme that catalyzes the reactions from geranylgeranyl diphosphate to phytoene (phytoene synthase) and lycopene to beta-carotene via the intermediate gamma-carotene (lycopene cyclase). The cyclase preferentially catalyzes the symmetric cyclization of both ends of the substrate to produce dicyclic carotenoids. Beta-carotene is further processed to the acidic carotenoid astaxanthin. The protein is Bifunctional lycopene cyclase/phytoene synthase of Phaffia rhodozyma (Yeast).